A 235-amino-acid polypeptide reads, in one-letter code: tRNA (guanine-N(7)-)-methyltransferase (235 aa).

S-adenosyl-L-methionine-binding positions include Gly60, Glu83–Ile84, Asn116–Ala117, and Leu136. Residue Asp139 is part of the active site. Ser214–Glu216 provides a ligand contact to S-adenosyl-L-methionine.

This sequence belongs to the class I-like SAM-binding methyltransferase superfamily. TrmB family.

The protein localises to the nucleus. It carries out the reaction guanosine(46) in tRNA + S-adenosyl-L-methionine = N(7)-methylguanosine(46) in tRNA + S-adenosyl-L-homocysteine. It participates in tRNA modification; N(7)-methylguanine-tRNA biosynthesis. In terms of biological role, catalyzes the formation of N(7)-methylguanine at position 46 (m7G46) in tRNA. In Anopheles gambiae (African malaria mosquito), this protein is tRNA (guanine-N(7)-)-methyltransferase.